The sequence spans 349 residues: ATP phosphoribosyltransferase regulatory subunit (349 aa).

The tract at residues 325–349 (ANGRGRGVRPRRASARGGRAGTRPR) is disordered. Positions 339–349 (ARGGRAGTRPR) are enriched in low complexity.

Belongs to the class-II aminoacyl-tRNA synthetase family. HisZ subfamily. As to quaternary structure, heteromultimer composed of HisG and HisZ subunits.

It localises to the cytoplasm. The protein operates within amino-acid biosynthesis; L-histidine biosynthesis; L-histidine from 5-phospho-alpha-D-ribose 1-diphosphate: step 1/9. In terms of biological role, required for the first step of histidine biosynthesis. May allow the feedback regulation of ATP phosphoribosyltransferase activity by histidine. This is ATP phosphoribosyltransferase regulatory subunit from Anaeromyxobacter dehalogenans (strain 2CP-C).